The sequence spans 138 residues: Large ribosomal subunit protein uL16 (138 aa).

The disordered stretch occupies residues 1–29 (MSLLQPRKVKWRKPQKGRTKGKATRRNQV). Over residues 7–25 (RKVKWRKPQKGRTKGKATR) the composition is skewed to basic residues.

It belongs to the universal ribosomal protein uL16 family. Part of the 50S ribosomal subunit.

Functionally, binds 23S rRNA and is also seen to make contacts with the A and possibly P site tRNAs. The sequence is that of Large ribosomal subunit protein uL16 from Sulfurihydrogenibium sp. (strain YO3AOP1).